Here is a 1248-residue protein sequence, read N- to C-terminus: Apoptotic protease-activating factor 1 (1248 aa).

The CARD domain maps to 1 to 90 (MDAKARNCLL…KDLAALLHDG (90 aa)). An NB-ARC domain is found at 104-415 (SGITSYVRTV…METEEVEDIL (312 aa)). Residues 154-161 (GMAGCGKS) and R265 each bind ATP. The WD 1-1 repeat unit spans residues 613–652 (PHTDAVYHACFSEDGQRIASCGADKTLQVFKAETGEKLLE). Residues 655 to 694 (AHEDEVLCCAFSTDDRFIATCSVDKKVKIWNSMTGELVHT) form a WD 1-2 repeat. The WD 1-3 repeat unit spans residues 697–738 (EHSEQVNCCHFTNSSHHLLLATGSSDCFLKLWDLNQKECRNT). Residues 741–780 (GHTNSVNHCRFSPDDKLLASCSADGTLKLWDATSANERKS) form a WD 1-4 repeat. The WD 1-5 repeat unit spans residues 796-836 (DMEVIVKCCSWSADGARIMVAAKNKIFLFDIHTSGLLGEIH). Residues 838–877 (GHHSTIQYCDFSPQNHLAVVALSQYCVELWNTDSRSKVAD) form a WD 1-6 repeat. One copy of the WD 1-7 repeat lies at 880-910 (GHLSWVHGVMFSPDGSSFLTSSDDQTIRLWE). The interpropeller linker stretch occupies residues 910 to 921 (ETKKVCKNSAVM). One copy of the WD 2-1 repeat lies at 922 to 958 (LKQEVDVVFQENEVMVLAVDHIRRLQLINGRTGQIDY). A WD 2-2 repeat occupies 959–998 (LTEAQVSCCCLSPHLQYIAFGDENGAIEILELVNNRIFQS). The WD 2-3 repeat unit spans residues 1001–1040 (QHKKTVWHIQFTADEKTLISSSDDAEIQVWNWQLDKCIFL). One copy of the WD 2-4 repeat lies at 1042 to 1080 (GHQETVKDFRLLKNSRLLSWSFDGTVKVWNIITGNKEKD). The WD 2-5 repeat unit spans residues 1083–1122 (CHQGTVLSCDISHDATKFSSTSADKTAKIWSFDLLLPLHE). A WD 2-6 repeat occupies 1125–1164 (GHNGCVRCSAFSVDSTLLATGDDNGEIRIWNVSNGELLHL). The stretch at 1175–1212 (THGGWVTDLCFSPDGKMLISAGGYIKWWNVVTGESSQT) is one WD 2-7 repeat. The WD 2-8 repeat unit spans residues 1213–1248 (FYTNGTNLKKIHVSPDFKTYVTVDNLGILYILQTLE).

In terms of assembly, monomer. Oligomerizes to a heptameric ring, known as the apoptosome, upon binding of cytochrome c and dATP. Oligomeric Apaf-1 and pro-caspase-9 bind to each other via their respective NH2-terminal CARD domains and consecutively mature caspase-9 is released from the complex. Pro-caspase-3 is recruited into the Apaf-1-pro-caspase-9 complex via interaction with pro-caspase-9. Interacts with APIP. Interacts (via CARD and NACHT domains) with NAIP/BIRC1 (via NACHT domain). Interacts with CIAO2A. In terms of tissue distribution, ubiquitous. Highest levels of expression in adult spleen and peripheral blood leukocytes, and in fetal brain, kidney and lung. Isoform 1 is expressed in heart, kidney and liver.

Its subcellular location is the cytoplasm. Functionally, oligomeric Apaf-1 mediates the cytochrome c-dependent autocatalytic activation of pro-caspase-9 (Apaf-3), leading to the activation of caspase-3 and apoptosis. This activation requires ATP. Isoform 6 is less effective in inducing apoptosis. In Homo sapiens (Human), this protein is Apoptotic protease-activating factor 1.